The chain runs to 651 residues: Beta-mannosyltransferase 7 (651 aa).

Residues 1 to 19 (MKLEMSSYLHKVPNTGITN) lie on the Cytoplasmic side of the membrane. A helical membrane pass occupies residues 20–42 (LSNSKSIVFIMFCATLLFIITSS). Topologically, residues 43 to 651 (RYLTGSESLG…VKIDEKSEET (609 aa)) are extracellular. Asn-271 and Asn-423 each carry an N-linked (GlcNAc...) asparagine glycan.

This sequence belongs to the BMT family.

It localises to the membrane. Functionally, beta-mannosyltransferase involved in cell wall biosynthesis through beta-1,2-mannosylation of cell wall phosphopeptidomannan. In Candida albicans (strain SC5314 / ATCC MYA-2876) (Yeast), this protein is Beta-mannosyltransferase 7 (BMT7).